Here is a 455-residue protein sequence, read N- to C-terminus: Probable circularly permuted 1,3-beta-glucanase TOS1 (455 aa).

Positions methionine 1–alanine 23 are cleaved as a signal peptide. Positions threonine 158–glycine 221 are disordered. The segment covering serine 172–glutamate 189 has biased composition (polar residues). The segment covering threonine 190–threonine 219 has biased composition (low complexity). Asparagine 236 is a glycosylation site (N-linked (GlcNAc...) asparagine). The ExDxxE motif signature appears at glutamate 372–glutamate 377. Asparagine 417 carries N-linked (GlcNAc...) asparagine glycosylation.

Belongs to the PGA52 family.

It localises to the secreted. The protein resides in the cell wall. The catalysed reaction is Hydrolysis of (1-&gt;3)-beta-D-glucosidic linkages in (1-&gt;3)-beta-D-glucans.. In terms of biological role, probable circularly permuted 1,3-beta-glucanase involved in cell wall modification through beta-1,3-glucan network alterations such as increased branching or remodeling. The polypeptide is Probable circularly permuted 1,3-beta-glucanase TOS1 (Saccharomyces cerevisiae (strain ATCC 204508 / S288c) (Baker's yeast)).